A 1088-amino-acid polypeptide reads, in one-letter code: ATP-dependent helicase/deoxyribonuclease subunit B (1088 aa).

This sequence belongs to the helicase family. AddB/RexB type 2 subfamily. As to quaternary structure, heterodimer of AddA and RexB. Mg(2+) serves as cofactor.

The heterodimer acts as both an ATP-dependent DNA helicase and an ATP-dependent, dual-direction single-stranded exonuclease. Recognizes the chi site generating a DNA molecule suitable for the initiation of homologous recombination. This subunit has 5' -&gt; 3' nuclease activity but not helicase activity. This chain is ATP-dependent helicase/deoxyribonuclease subunit B, found in Streptococcus suis (strain 98HAH33).